Consider the following 252-residue polypeptide: Phosphate import ATP-binding protein PstB (252 aa).

An ABC transporter domain is found at 5–247; it reads MRGQDVKVFY…PKEQRTQDYI (243 aa). Position 37–44 (37–44) interacts with ATP; that stretch reads GPSGCGKS.

It belongs to the ABC transporter superfamily. Phosphate importer (TC 3.A.1.7) family. As to quaternary structure, the complex is composed of two ATP-binding proteins (PstB), two transmembrane proteins (PstC and PstA) and a solute-binding protein (PstS).

It is found in the cell inner membrane. It carries out the reaction phosphate(out) + ATP + H2O = ADP + 2 phosphate(in) + H(+). In terms of biological role, part of the ABC transporter complex PstSACB involved in phosphate import. Responsible for energy coupling to the transport system. In Bartonella henselae (strain ATCC 49882 / DSM 28221 / CCUG 30454 / Houston 1) (Rochalimaea henselae), this protein is Phosphate import ATP-binding protein PstB.